The chain runs to 311 residues: Heme A synthase (311 aa).

Residues 1–6 (MQRFIK) lie on the Cytoplasmic side of the membrane. A helical membrane pass occupies residues 7-27 (WLAVITSLDLLIVLLGGALVT). Topologically, residues 28-62 (KTGSGQGCGKSWPLCNGEFVPSNLSMETIIELSHR) are extracellular. A disulfide bridge connects residues Cys35 and Cys42. Residue Glu58 is part of the active site. His61 contacts heme o. A helical membrane pass occupies residues 63–83 (LTSGSAGILVTLLCILSWKYY). The Cytoplasmic portion of the chain corresponds to 84–91 (KHVRETKT). A helical membrane pass occupies residues 92-112 (LAILSFVFLVAQALMGAAAVV). The Extracellular portion of the chain corresponds to 113 to 121 (WGQMPAVLA). A helical transmembrane segment spans residues 122 to 142 (IHFGISLISFASVILLTCLIF). His123 provides a ligand contact to heme o. At 143–159 (EIDQKFDARSLIMDKKM) the chain is on the cytoplasmic side. A helical transmembrane segment spans residues 160-180 (KFHIYGVTIYSYIVVYTGALV). Residues 181 to 211 (RHERASLACPDFPLCSKNRPMPTQLHEWVQM) lie on the Extracellular side of the membrane. The cysteines at positions 189 and 195 are disulfide-linked. A helical membrane pass occupies residues 212–232 (GHRVAAMLIFAWILYAMILAI). Residue His213 coordinates heme b. The Cytoplasmic portion of the chain corresponds to 233 to 243 (RHYKQQPVVYW). A helical transmembrane segment spans residues 244–264 (GWIISFILVTLQAIVGILVVF). Over 265 to 271 (TNASLSM) the chain is Extracellular. The helical transmembrane segment at 272 to 292 (ALLHSLFISCLFAVLCYLVML) threads the bilayer. His275 serves as a coordination point for heme b. Residues 293-311 (GTRSKVNAKEAASISKQTK) are Cytoplasmic-facing.

This sequence belongs to the COX15/CtaA family. Type 1 subfamily. Interacts with CtaB. Heme b is required as a cofactor.

It localises to the cell membrane. The enzyme catalyses Fe(II)-heme o + 2 A + H2O = Fe(II)-heme a + 2 AH2. The protein operates within porphyrin-containing compound metabolism; heme A biosynthesis; heme A from heme O: step 1/1. In terms of biological role, catalyzes the conversion of heme O to heme A by two successive hydroxylations of the methyl group at C8. The first hydroxylation forms heme I, the second hydroxylation results in an unstable dihydroxymethyl group, which spontaneously dehydrates, resulting in the formyl group of heme A. The polypeptide is Heme A synthase (Bacillus cereus (strain AH187)).